We begin with the raw amino-acid sequence, 211 residues long: Adenylyl-sulfate kinase (211 aa).

ATP is bound at residue 36–43 (GLSGSGKS). Ser-110 serves as the catalytic Phosphoserine intermediate.

The protein belongs to the APS kinase family.

It carries out the reaction adenosine 5'-phosphosulfate + ATP = 3'-phosphoadenylyl sulfate + ADP + H(+). It participates in sulfur metabolism; hydrogen sulfide biosynthesis; sulfite from sulfate: step 2/3. Catalyzes the synthesis of activated sulfate. This Buchnera aphidicola subsp. Schizaphis graminum (strain Sg) protein is Adenylyl-sulfate kinase (cysC).